The following is a 221-amino-acid chain: Uracil-DNA glycosylase (221 aa).

The active-site Proton acceptor is aspartate 64.

The protein belongs to the uracil-DNA glycosylase (UDG) superfamily. UNG family.

It localises to the cytoplasm. It catalyses the reaction Hydrolyzes single-stranded DNA or mismatched double-stranded DNA and polynucleotides, releasing free uracil.. Its function is as follows. Excises uracil residues from the DNA which can arise as a result of misincorporation of dUMP residues by DNA polymerase or due to deamination of cytosine. In Mycoplasmopsis pulmonis (strain UAB CTIP) (Mycoplasma pulmonis), this protein is Uracil-DNA glycosylase.